The chain runs to 878 residues: Phosphoenolpyruvate carboxylase (878 aa).

Active-site residues include histidine 138 and lysine 545.

Belongs to the PEPCase type 1 family. Requires Mg(2+) as cofactor.

The catalysed reaction is oxaloacetate + phosphate = phosphoenolpyruvate + hydrogencarbonate. In terms of biological role, forms oxaloacetate, a four-carbon dicarboxylic acid source for the tricarboxylic acid cycle. The protein is Phosphoenolpyruvate carboxylase of Shewanella halifaxensis (strain HAW-EB4).